The chain runs to 156 residues: Fibroblast growth factor 2 (156 aa).

A propeptide spanning residues Met1–Leu9 is cleaved from the precursor. Asn37 lines the heparin pocket. Tyr83 carries the post-translational modification Phosphotyrosine; by TEC. A Glycyl lysine isopeptide (Lys-Gly) (interchain with G-Cter in SUMO1) cross-link involves residue Lys96. Positions Lys129–Lys145 are heparin-binding.

This sequence belongs to the heparin-binding growth factors family. As to quaternary structure, monomer. Homodimer. Interacts with FGFR1, FGFR2, FGFR3 and FGFR4. Affinity between fibroblast growth factors (FGFs) and their receptors is increased by heparan sulfate glycosaminoglycans that function as coreceptors. Interacts with CSPG4, FGFBP1 and TEC. Found in a complex with FGFBP1, FGF1 and FGF2. Interacts with FGFBP3. Interacts with integrin ITGAV:ITGB3; the interaction is required for FGF2 signaling. Interacts with SNORC (via the extracellular domain). Interacts with glypican GPC3. Post-translationally, phosphorylation at Tyr-83 regulates FGF2 unconventional secretion.

Its subcellular location is the secreted. It localises to the nucleus. Its function is as follows. Acts as a ligand for FGFR1, FGFR2, FGFR3 and FGFR4. Also acts as an integrin ligand which is required for FGF2 signaling. Binds to integrin ITGAV:ITGB3. Plays an important role in the regulation of cell survival, cell division, cell differentiation and cell migration. Functions as a potent mitogen in vitro. Can induce angiogenesis. Mediates phosphorylation of ERK1/2 and thereby promotes retinal lens fiber differentiation. In Monodelphis domestica (Gray short-tailed opossum), this protein is Fibroblast growth factor 2 (FGF2).